The chain runs to 512 residues: AMP phosphorylase (512 aa).

AMP contacts are provided by residues glycine 166, 192-197, and threonine 201; that span reads SRAITG. The active-site Proton donor is the aspartate 254. Positions 262 and 286 each coordinate AMP.

Belongs to the thymidine/pyrimidine-nucleoside phosphorylase family. Type 2 subfamily.

The enzyme catalyses AMP + phosphate = alpha-D-ribose 1,5-bisphosphate + adenine. The catalysed reaction is CMP + phosphate = cytosine + alpha-D-ribose 1,5-bisphosphate. It catalyses the reaction UMP + phosphate = alpha-D-ribose 1,5-bisphosphate + uracil. In terms of biological role, catalyzes the conversion of AMP and phosphate to adenine and ribose 1,5-bisphosphate (R15P). Exhibits phosphorylase activity toward CMP and UMP in addition to AMP. Functions in an archaeal AMP degradation pathway, together with R15P isomerase and RubisCO. The sequence is that of AMP phosphorylase from Methanothrix thermoacetophila (strain DSM 6194 / JCM 14653 / NBRC 101360 / PT) (Methanosaeta thermophila).